Consider the following 353-residue polypeptide: uncharacterized protein (353 aa).

3 disordered regions span residues Met-1–Gln-24, Asn-245–Pro-280, and Ala-305–Asn-353. Residues Asn-9–Gln-24 are compositionally biased toward low complexity. Positions Lys-254–Pro-280 are enriched in basic and acidic residues. Low complexity predominate over residues Val-321–Val-332. Residues Glu-342–Asn-353 are compositionally biased toward acidic residues.

This is an uncharacterized protein from Acanthamoeba polyphaga mimivirus (APMV).